The sequence spans 224 residues: Ribose-5-phosphate isomerase A (224 aa).

Residues 32–35, 85–88, and 98–101 each bind substrate; these read TGST, DGAD, and KGGG. The active-site Proton acceptor is the Glu107. Residue Lys125 coordinates substrate.

It belongs to the ribose 5-phosphate isomerase family. As to quaternary structure, homodimer.

It catalyses the reaction aldehydo-D-ribose 5-phosphate = D-ribulose 5-phosphate. It participates in carbohydrate degradation; pentose phosphate pathway; D-ribose 5-phosphate from D-ribulose 5-phosphate (non-oxidative stage): step 1/1. Functionally, catalyzes the reversible conversion of ribose-5-phosphate to ribulose 5-phosphate. This Pseudomonas putida (strain GB-1) protein is Ribose-5-phosphate isomerase A.